The sequence spans 181 residues: Adenylate kinase (181 aa).

10–15 (GAGKGT) serves as a coordination point for ATP. Residues 30-59 (STGELFRKNIQDGTKLGVEAKRYLDAGDLV) form an NMP region. Residues Thr31, Arg36, 57–59 (DLV), 85–88 (GYPR), and Gln92 contribute to the AMP site. An LID region spans residues 126–132 (GRGRADD). Arg127 serves as a coordination point for ATP. 2 residues coordinate AMP: Arg129 and Arg140. Residue Gly166 coordinates ATP.

This sequence belongs to the adenylate kinase family. As to quaternary structure, monomer.

It localises to the cytoplasm. The catalysed reaction is AMP + ATP = 2 ADP. The protein operates within purine metabolism; AMP biosynthesis via salvage pathway; AMP from ADP: step 1/1. Catalyzes the reversible transfer of the terminal phosphate group between ATP and AMP. Plays an important role in cellular energy homeostasis and in adenine nucleotide metabolism. The protein is Adenylate kinase of Mycobacterium ulcerans (strain Agy99).